Consider the following 913-residue polypeptide: Protein ECT2 (913 aa).

Alanine 2 carries the N-acetylalanine modification. BRCT domains lie at 176–260 (MLNL…AAVD) and 266–354 (FKVP…MYLY). Phosphothreonine; by PKC/PRKCI is present on threonine 359. Residues serine 367 and serine 370 each carry the phosphoserine modification. Residue threonine 373 is modified to Phosphothreonine. Serine 376 is modified (phosphoserine). 2 consecutive short sequence motifs (nuclear localization signal) follow at residues 378-382 (RKRRR) and 401-405 (PRKRP). 2 disordered regions span residues 389–415 (QLSRETDLSPFPPRKRPSAEHSLSIGS) and 427–450 (IHYGETPKSCAKSSRSSTPVPPKQ). Threonine 444 is subject to Phosphothreonine; by CDK1. The DH domain maps to 452 to 641 (ARWQVAKELY…KEVMTHINED (190 aa)). Residue lysine 611 forms a Glycyl lysine isopeptide (Lys-Gly) (interchain with G-Cter in SUMO2) linkage. The PH domain occupies 675–794 (RVETVSLGEH…KMLCRHVANT (120 aa)). Phosphoserine is present on residues serine 716 and serine 842. At threonine 846 the chain carries Phosphothreonine; by CDK1. Positions 853–874 (MALSSSHSSEGRSPPSSGKLAV) are disordered. Positions 856-870 (SSSHSSEGRSPPSSG) are enriched in low complexity. Phosphoserine is present on residues serine 861 and serine 865.

In terms of assembly, homodimer. Homooligomer. Found in the centralspindlin complex. Interacts with NR1I3. Interacts (Thr-359 phosphorylated form) with PARD6A; the interaction is observed in cancer cells. Interacts (Thr-359 phosphorylated form) with PRKCI; the interaction is observed in cancer cells. Interacts with PKP4; the interaction is observed at the midbody. Interacts with RACGAP1; the interaction is direct, occurs in a microtubule-dependent manner, occurs at anaphase and during cytokinesis, is inhibited in metaphase by phosphorylation of ECT2 on Thr-373 and is stimulated in early anaphase by dephosphorylation of ECT2 probably on Thr-373 through CDK1 activity. Interacts with PLK1; the interaction is stimulated upon its phosphorylation on Thr-444. Interacts with RHOA; the interaction results in allosteric activation of ECT2. Interacts with KIF23, PARD3, PARD6B and PRKCQ. Interacts with NEDD9/HEF1. In terms of processing, phosphorylated by PLK1 in vitro. Hyperphosphorylated during the G2 phase of the cell cycle. Phosphorylation at Thr-373 occurs during the G2/M phase, relieves its auto-inhibition status and stimulates its GEF activity. Phosphorylation at Thr-444 in G2/M phase is required for subsequent binding with PLK1 and Rho exchange activation. Dephosphorylated at the time of cytokinesis. Phosphorylation at Thr-359 is required for its transformation activity in cancer cells. In terms of tissue distribution, highest expression in testis. Also detectable in brain, kidney, liver and spleen.

The protein localises to the nucleus. The protein resides in the cytoplasm. It localises to the cytoskeleton. It is found in the spindle. Its subcellular location is the cleavage furrow. The protein localises to the midbody. The protein resides in the cell junction. It localises to the tight junction. Its activity is regulated as follows. Autoinhibited by the C-terminal PH domain which folds back and binds to the surface of the DH domain, blocking binding of RHOA to the catalytic center of the DH domain. The 2nd BRCT domain is also involved in inhibition, probably by helping to impede RHOA binding. Allosterically activated by binding of activated GTP-bound RHOA to the PH domain which stimulates the release of PH inhibition and promotes the binding of substrate RHOA to the catalytic center. Binding of phosphorylated RACGAP1 to the N-terminal BRCT domain-containing region also releases autoinhibition. Functionally, guanine nucleotide exchange factor (GEF) that catalyzes the exchange of GDP for GTP. Promotes guanine nucleotide exchange on the Rho family members of small GTPases, like RHOA, RHOC, RAC1 and CDC42. Required for signal transduction pathways involved in the regulation of cytokinesis. Component of the centralspindlin complex that serves as a microtubule-dependent and Rho-mediated signaling required for the myosin contractile ring formation during the cell cycle cytokinesis. Regulates the translocation of RHOA from the central spindle to the equatorial region. Plays a role in the control of mitotic spindle assembly; regulates the activation of CDC42 in metaphase for the process of spindle fibers attachment to kinetochores before chromosome congression. Involved in the regulation of epithelial cell polarity; participates in the formation of epithelial tight junctions in a polarity complex PARD3-PARD6-protein kinase PRKCQ-dependent manner. Plays a role in the regulation of neurite outgrowth. Inhibits phenobarbital (PB)-induced NR1I3 nuclear translocation. Stimulates the activity of RAC1 through its association with the oncogenic PARD6A-PRKCI complex in cancer cells, thereby acting to coordinately drive tumor cell proliferation and invasion. Also stimulates genotoxic stress-induced RHOB activity in breast cancer cells leading to their cell death. In Mus musculus (Mouse), this protein is Protein ECT2 (Ect2).